A 136-amino-acid chain; its full sequence is Peptide methionine sulfoxide reductase MsrB (136 aa).

The 123-residue stretch at 13-135 (ENDWRSKLTP…NSASLDFKDK (123 aa)) folds into the MsrB domain. The Zn(2+) site is built by C52, C55, C101, and C104. C124 functions as the Nucleophile in the catalytic mechanism.

The protein belongs to the MsrB Met sulfoxide reductase family. It depends on Zn(2+) as a cofactor.

The catalysed reaction is L-methionyl-[protein] + [thioredoxin]-disulfide + H2O = L-methionyl-(R)-S-oxide-[protein] + [thioredoxin]-dithiol. The sequence is that of Peptide methionine sulfoxide reductase MsrB from Synechococcus sp. (strain RCC307).